Here is a 282-residue protein sequence, read N- to C-terminus: 1,4-dihydroxy-6-naphtoate synthase (282 aa).

Substrate is bound by residues 57-59 (KVS) and 109-110 (TA). Catalysis depends on histidine 153, which acts as the Proton acceptor.

This sequence belongs to the MqnA/MqnD family. MqnD subfamily.

It carries out the reaction cyclic dehypoxanthinylfutalosinate = 1,4-dihydroxy-6-naphthoate + dihydroxyacetone. It participates in quinol/quinone metabolism; menaquinone biosynthesis. Catalyzes the conversion of cyclic dehypoxanthine futalosine (cyclic DHFL) into 1,4-dihydroxy-6-naphthoate, a step in the biosynthesis of menaquinone (MK, vitamin K2). This is 1,4-dihydroxy-6-naphtoate synthase from Streptomyces coelicolor (strain ATCC BAA-471 / A3(2) / M145).